We begin with the raw amino-acid sequence, 196 residues long: ATP-dependent Clp protease proteolytic subunit (196 aa).

Ser-101 (nucleophile) is an active-site residue. The active site involves His-126.

The protein belongs to the peptidase S14 family. In terms of assembly, component of the chloroplastic Clp protease core complex.

It is found in the plastid. The protein resides in the chloroplast stroma. It catalyses the reaction Hydrolysis of proteins to small peptides in the presence of ATP and magnesium. alpha-casein is the usual test substrate. In the absence of ATP, only oligopeptides shorter than five residues are hydrolyzed (such as succinyl-Leu-Tyr-|-NHMec, and Leu-Tyr-Leu-|-Tyr-Trp, in which cleavage of the -Tyr-|-Leu- and -Tyr-|-Trp bonds also occurs).. Its function is as follows. Cleaves peptides in various proteins in a process that requires ATP hydrolysis. Has a chymotrypsin-like activity. Plays a major role in the degradation of misfolded proteins. This chain is ATP-dependent Clp protease proteolytic subunit, found in Panax ginseng (Korean ginseng).